A 266-amino-acid chain; its full sequence is Glutamate racemase (266 aa).

Substrate-binding positions include 9-10 (DS) and 41-42 (YG). C72 functions as the Proton donor/acceptor in the catalytic mechanism. 73–74 (NT) serves as a coordination point for substrate. C183 acts as the Proton donor/acceptor in catalysis. 184-185 (TH) lines the substrate pocket.

The protein belongs to the aspartate/glutamate racemases family.

The enzyme catalyses L-glutamate = D-glutamate. It participates in cell wall biogenesis; peptidoglycan biosynthesis. Its function is as follows. Provides the (R)-glutamate required for cell wall biosynthesis. This Listeria monocytogenes serotype 4b (strain CLIP80459) protein is Glutamate racemase.